A 668-amino-acid polypeptide reads, in one-letter code: UvrABC system protein C (668 aa).

One can recognise a GIY-YIG domain in the interval 14–91 (DSPGCYLHKD…IQRYKPKYNI (78 aa)). The UVR domain occupies 196 to 231 (KKIVNELEAKMMVSSDNMEFEQAAEYRDVIKAIGTL).

This sequence belongs to the UvrC family. Interacts with UvrB in an incision complex.

It is found in the cytoplasm. Functionally, the UvrABC repair system catalyzes the recognition and processing of DNA lesions. UvrC both incises the 5' and 3' sides of the lesion. The N-terminal half is responsible for the 3' incision and the C-terminal half is responsible for the 5' incision. This chain is UvrABC system protein C, found in Lactococcus lactis subsp. lactis (strain IL1403) (Streptococcus lactis).